Consider the following 236-residue polypeptide: Osmoprotectant import permease protein OsmY (236 aa).

The next 6 membrane-spanning stretches (helical) occupy residues 9–29, 47–67, 95–115, 126–146, 180–200, and 207–227; these read VLGF…GIGL, LMLV…SGIL, VLAL…VALF, TYAG…GIGM, PLAF…GIYL, and ILGA…LAWF. The ABC transmembrane type-1 domain occupies 43–224; that stretch reads GQRHLMLVFT…LFALILDTLL (182 aa).

This sequence belongs to the binding-protein-dependent transport system permease family. In terms of assembly, the complex is composed of two ATP-binding proteins (OsmV), two transmembrane proteins (OsmW and OsmY) and a solute-binding protein (OsmX).

It localises to the cell inner membrane. Part of the OsmU ABC transporter complex, which is involved in the uptake of osmoprotectants such as choline-O-sulfate and glycine betaine. Probably responsible for the translocation of the substrate across the membrane. The protein is Osmoprotectant import permease protein OsmY (osmY) of Salmonella typhimurium (strain LT2 / SGSC1412 / ATCC 700720).